Reading from the N-terminus, the 391-residue chain is GTPase Obg (391 aa).

In terms of domain architecture, Obg spans 1 to 159 (MKFLDQAKIF…IWVWLRLKLI (159 aa)). The OBG-type G domain occupies 160-327 (ADAGLIGLPN…VLRVMATHVD (168 aa)). Residues 166 to 173 (GLPNAGKS), 191 to 195 (FTTLH), 212 to 215 (DIPG), 279 to 282 (SKID), and 308 to 310 (SAI) each bind GTP. Mg(2+)-binding residues include Ser173 and Thr193. The disordered stretch occupies residues 352 to 391 (TGIDHGYNRPSAVVDWEDAPFDDDDDDDGDESGDKGQWTR). Acidic residues predominate over residues 366-382 (DWEDAPFDDDDDDDGDE).

The protein belongs to the TRAFAC class OBG-HflX-like GTPase superfamily. OBG GTPase family. As to quaternary structure, monomer. Mg(2+) is required as a cofactor.

It localises to the cytoplasm. In terms of biological role, an essential GTPase which binds GTP, GDP and possibly (p)ppGpp with moderate affinity, with high nucleotide exchange rates and a fairly low GTP hydrolysis rate. Plays a role in control of the cell cycle, stress response, ribosome biogenesis and in those bacteria that undergo differentiation, in morphogenesis control. This is GTPase Obg from Rhodospirillum rubrum (strain ATCC 11170 / ATH 1.1.1 / DSM 467 / LMG 4362 / NCIMB 8255 / S1).